The sequence spans 666 residues: Frizzled-3 (666 aa).

An N-terminal signal peptide occupies residues 1–22 (MAMTWIVFSLWPLTVFMGHIGG). Residues 23–136 (HSLFSCEPIT…CSRFPDCDEP (114 aa)) form the FZ domain. The Extracellular segment spans residues 23–205 (HSLFSCEPIT…REELSFARYF (183 aa)). Disulfide bonds link C28–C89, C36–C82, C73–C110, C99–C133, and C103–C127. N42 carries N-linked (GlcNAc...) asparagine glycosylation. A helical transmembrane segment spans residues 206–226 (IGLISIICLSATLFTFLTFLI). Residues 227 to 237 (DVTRFRYPERP) are Cytoplasmic-facing. A helical transmembrane segment spans residues 238–258 (IIFYAVCYMMVSLIFFIGFLL). The Extracellular segment spans residues 259 to 288 (EDRVACNASIPAQYKASTVTQGSHNKACTM). N-linked (GlcNAc...) asparagine glycosylation is present at N265. A helical membrane pass occupies residues 289 to 309 (LFMILYFFTMAGSVWWVILTI). At 310 to 328 (TWFLAAVPKWGSEAIEKKA) the chain is on the cytoplasmic side. Residues 329–349 (LLFHASAWGIPGTLTIILLAM) traverse the membrane as a helical segment. The Extracellular segment spans residues 350 to 374 (NKIEGDNISGVCFVGLYDVDALRYF). Residue N356 is glycosylated (N-linked (GlcNAc...) asparagine). Residues 375 to 395 (VLAPLCLYVVVGVSLLLAGII) traverse the membrane as a helical segment. Residues 396 to 420 (SLNRVRIEIPLEKENQDKLVKFMIR) are Cytoplasmic-facing. The helical transmembrane segment at 421 to 441 (IGVFSILYLVPLLVVIGCYFY) threads the bilayer. The Extracellular portion of the chain corresponds to 442–477 (EQAYRGIWETTWIQERCREYHIPCPYQVTQMSRPDL). A helical transmembrane segment spans residues 478–498 (ILFLMKYLMALIVGIPSVFWV). Residues 499–666 (GSKKTCFEWA…RVIEEDGTSA (168 aa)) lie on the Cytoplasmic side of the membrane. The Lys-Thr-X-X-X-Trp motif, mediates interaction with the PDZ domain of Dvl family members signature appears at 502 to 507 (KTCFEW). The tract at residues 538-666 (RDPNTPIIRK…RVIEEDGTSA (129 aa)) is disordered. Residues 550 to 565 (GTSTQGTSTHASSTQL) are compositionally biased toward polar residues. Over residues 617 to 638 (LTDHSRHSSSHRLNEQSRHSSI) the composition is skewed to basic and acidic residues. The span at 639 to 656 (RDLSNNPMTHITHGTSMN) shows a compositional bias: polar residues.

Belongs to the G-protein coupled receptor Fz/Smo family. In terms of assembly, interacts with VANGL2. Post-translationally, ubiquitinated by ZNRF3, leading to its degradation by the proteasome. Widely expressed. Relatively high expression in the CNS, including regions of the limbic system, in kidney, pancreas, skeletal muscle, uterus and testis.

The protein localises to the membrane. The protein resides in the cell membrane. Its subcellular location is the cell surface. It localises to the apical cell membrane. Receptor for Wnt proteins. Most of frizzled receptors are coupled to the beta-catenin canonical signaling pathway, which leads to the activation of disheveled proteins, inhibition of GSK-3 kinase, nuclear accumulation of beta-catenin and activation of Wnt target genes. A second signaling pathway involving PKC and calcium fluxes has been seen for some family members, but it is not yet clear if it represents a distinct pathway or if it can be integrated in the canonical pathway, as PKC seems to be required for Wnt-mediated inactivation of GSK-3 kinase. Both pathways seem to involve interactions with G-proteins. Activation by Wnt5A stimulates PKC activity via a G-protein-dependent mechanism. Involved in transduction and intercellular transmission of polarity information during tissue morphogenesis and/or in differentiated tissues. Plays a role in controlling early axon growth and guidance processes necessary for the formation of a subset of central and peripheral major fiber tracts. Required for the development of major fiber tracts in the central nervous system, including: the anterior commissure, the corpus callosum, the thalamocortical, corticothalamic and nigrostriatal tracts, the corticospinal tract, the fasciculus retroflexus, the mammillothalamic tract, the medial lemniscus, and ascending fiber tracts from the spinal cord to the brain. In the peripheral nervous system, controls axon growth in distinct populations of cranial and spinal motor neurons, including the facial branchimotor nerve, the hypoglossal nerve, the phrenic nerve, and motor nerves innervating dorsal limbs. Involved in the migration of cranial neural crest cells. May also be implicated in the transmission of sensory information from the trunk and limbs to the brain. Controls commissural sensory axons guidance after midline crossing along the anterior-posterior axis in the developing spinal cord in a Wnt-dependent signaling pathway. Together with FZD6, is involved in the neural tube closure and plays a role in the regulation of the establishment of planar cell polarity (PCP), particularly in the orientation of asymmetric bundles of stereocilia on the apical faces of a subset of auditory and vestibular sensory cells located in the inner ear. Promotes neurogenesis by maintaining sympathetic neuroblasts within the cell cycle in a beta-catenin-dependent manner. This Homo sapiens (Human) protein is Frizzled-3 (FZD3).